The primary structure comprises 322 residues: ATP-dependent 6-phosphofructokinase (322 aa).

Residues Gly-12, 73–74 (RF), and 103–106 (GDGT) contribute to the ATP site. Position 104 (Asp-104) interacts with Mg(2+). 126-128 (TID) serves as a coordination point for substrate. The active-site Proton acceptor is the Asp-128. Residue Arg-155 coordinates ADP. Substrate is bound by residues Arg-163 and 170–172 (MGR). ADP-binding positions include 186 to 188 (GSE), Lys-212, and 214 to 216 (KPS). Residues Glu-223, Arg-245, and 251–254 (HTQR) contribute to the substrate site.

The protein belongs to the phosphofructokinase type A (PFKA) family. ATP-dependent PFK group I subfamily. Prokaryotic clade 'B1' sub-subfamily. Homotetramer. It depends on Mg(2+) as a cofactor.

The protein resides in the cytoplasm. The catalysed reaction is beta-D-fructose 6-phosphate + ATP = beta-D-fructose 1,6-bisphosphate + ADP + H(+). It functions in the pathway carbohydrate degradation; glycolysis; D-glyceraldehyde 3-phosphate and glycerone phosphate from D-glucose: step 3/4. With respect to regulation, allosterically activated by ADP and other diphosphonucleosides, and allosterically inhibited by phosphoenolpyruvate. Functionally, catalyzes the phosphorylation of D-fructose 6-phosphate to fructose 1,6-bisphosphate by ATP, the first committing step of glycolysis. This Mesomycoplasma hyopneumoniae (strain J / ATCC 25934 / NCTC 10110) (Mycoplasma hyopneumoniae) protein is ATP-dependent 6-phosphofructokinase.